Reading from the N-terminus, the 71-residue chain is Antimicrobial peptide VpCT4 (71 aa).

The N-terminal stretch at 1–23 (MKTQFVILIVAIVILQLISQSEA) is a signal peptide. L39 bears the Leucine amide mark. A propeptide spanning residues 40–71 (GKRGVQNMDQFDDIFEPELSEADLRYLQDLLR) is cleaved from the precursor.

This sequence belongs to the non-disulfide-bridged peptide (NDBP) superfamily. Short antimicrobial peptide (group 4) family. As to expression, expressed by the venom gland.

Its subcellular location is the secreted. The protein resides in the target cell membrane. Functionally, antimicrobial peptide with potent activity against bacteria S.aureus (MIC=9.3 uM), weak activity against E.coli (MIC&gt;100 uM), and weak activity against pathogenic yeasts C.albicans (MIC=100 uM) and C.glabrata (MIC=100 uM). Is not very effective against P.aeruginosa (MIC&gt;300 uM). Also provokes high hemolysis on human erythrocytes (HC(50)=4.8 uM). The chain is Antimicrobial peptide VpCT4 from Mesomexovis punctatus (Scorpion).